We begin with the raw amino-acid sequence, 477 residues long: Transposase for insertion sequence element IS231F (477 aa).

It belongs to the transposase 11 family.

Functionally, involved in the transposition of the insertion sequence. In Bacillus thuringiensis subsp. israelensis, this protein is Transposase for insertion sequence element IS231F.